The primary structure comprises 429 residues: MGFLEEEGRWNLSFSGAGYLGAHHVGATECLRQRAPRLLQGARRIYGSSSGALNAVSIVCGKSVDFCCSHLLGMVGQLERLSLSILHPAYAPIEHVKQQLQDALPPDAHVLASQRLGISLTRWPDGRNFLVTDFATCDELIQALVCTLYFPFYCGLIPPEFRGERYIDGALSNNLPFADCPSTITVSPFHGTVDICPQSTSPNLHELNVFNFSFQISTENFFLGLICLIPPSLEVVADNCRQGYLDALRFLERRGLTKEPVLWTLVSKEPPAPADGNWDAGCDQRWKGGLSLNWKVPHVQVKDVPNFEQLSPELEAALKKACTRDPSRWARFWHSGPGQVLTYLLLPCTLPFEYIYFRSRRLVVWLPDVPADLWWMQGLLRNMALEVFSRTKAQLLGPISPPATRVLETSPLQPQIAPHREELGPTHQA.

Residues 12–181 form the PNPLA domain; sequence LSFSGAGYLG…SNNLPFADCP (170 aa). The GXGXXG motif lies at 16-21; sequence GAGYLG. Residues 47–51 carry the GXSXG motif; the sequence is GSSSG. Ser49 acts as the Nucleophile in catalysis. Asp168 serves as the catalytic Proton acceptor. The short motif at 168–170 is the DGA/G element; sequence DGA.

Expressed in brain and pituitary gland.

The catalysed reaction is a triacylglycerol + H2O = a diacylglycerol + a fatty acid + H(+). In terms of biological role, has abundant triacylglycerol lipase activity. The sequence is that of Patatin-like phospholipase domain-containing protein 5 from Homo sapiens (Human).